The chain runs to 193 residues: Ribonuclease HII (193 aa).

In terms of domain architecture, RNase H type-2 spans 15-193; it reads CIVAGIDEAG…PYHRRSFRCC (179 aa). 3 residues coordinate a divalent metal cation: aspartate 21, glutamate 22, and aspartate 112.

Belongs to the RNase HII family. It depends on Mn(2+) as a cofactor. Requires Mg(2+) as cofactor.

It localises to the cytoplasm. It catalyses the reaction Endonucleolytic cleavage to 5'-phosphomonoester.. Its function is as follows. Endonuclease that specifically degrades the RNA of RNA-DNA hybrids. The chain is Ribonuclease HII from Rickettsia rickettsii (strain Iowa).